The sequence spans 156 residues: MAIRRIEGLLHLASEGRYAILVGRFNSFVVEHLLEGAIDTLKRHGVSEDNITVAYAPGAWELPIVAKKLAASDKFDAIIALGAVIRGSTPHFDFVAGECAKGLGVVALESSLPVINGVLTTDSIEQAIERSGTKAGNKGSEAALTAIEMVNLLKAI.

5-amino-6-(D-ribitylamino)uracil is bound by residues phenylalanine 25, 59–61, and 83–85; these read AWE and AVI. 88–89 contributes to the (2S)-2-hydroxy-3-oxobutyl phosphate binding site; the sequence is ST. Histidine 91 serves as the catalytic Proton donor. Asparagine 116 contacts 5-amino-6-(D-ribitylamino)uracil. Arginine 130 serves as a coordination point for (2S)-2-hydroxy-3-oxobutyl phosphate.

The protein belongs to the DMRL synthase family. As to quaternary structure, forms an icosahedral capsid composed of 60 subunits, arranged as a dodecamer of pentamers.

The enzyme catalyses (2S)-2-hydroxy-3-oxobutyl phosphate + 5-amino-6-(D-ribitylamino)uracil = 6,7-dimethyl-8-(1-D-ribityl)lumazine + phosphate + 2 H2O + H(+). It participates in cofactor biosynthesis; riboflavin biosynthesis; riboflavin from 2-hydroxy-3-oxobutyl phosphate and 5-amino-6-(D-ribitylamino)uracil: step 1/2. Functionally, catalyzes the formation of 6,7-dimethyl-8-ribityllumazine by condensation of 5-amino-6-(D-ribitylamino)uracil with 3,4-dihydroxy-2-butanone 4-phosphate. This is the penultimate step in the biosynthesis of riboflavin. This Acinetobacter baylyi (strain ATCC 33305 / BD413 / ADP1) protein is 6,7-dimethyl-8-ribityllumazine synthase.